The following is a 215-amino-acid chain: Urease accessory protein UreG (215 aa).

24–31 (GPVGSGKT) contacts GTP.

It belongs to the SIMIBI class G3E GTPase family. UreG subfamily. Homodimer. UreD, UreF and UreG form a complex that acts as a GTP-hydrolysis-dependent molecular chaperone, activating the urease apoprotein by helping to assemble the nickel containing metallocenter of UreC. The UreE protein probably delivers the nickel.

It is found in the cytoplasm. Facilitates the functional incorporation of the urease nickel metallocenter. This process requires GTP hydrolysis, probably effectuated by UreG. This Burkholderia ambifaria (strain ATCC BAA-244 / DSM 16087 / CCUG 44356 / LMG 19182 / AMMD) (Burkholderia cepacia (strain AMMD)) protein is Urease accessory protein UreG.